The chain runs to 61 residues: Probable tautomerase lmo2564 (61 aa).

The active-site Proton acceptor; via imino nitrogen is Pro-2.

It belongs to the 4-oxalocrotonate tautomerase family.

The chain is Probable tautomerase lmo2564 from Listeria monocytogenes serovar 1/2a (strain ATCC BAA-679 / EGD-e).